Consider the following 439-residue polypeptide: GTPase Der (439 aa).

EngA-type G domains are found at residues 4–168 (PIVA…KDDE) and 177–352 (INIA…DNYT). GTP contacts are provided by residues 10–17 (GRPNVGKS), 57–61 (DTGGI), 120–123 (NKID), 183–190 (GKPNVGKS), 230–234 (DTAGL), and 295–298 (NKWD). The KH-like domain maps to 353-437 (KRVKTGVLND…GIKLEFRERK (85 aa)).

Belongs to the TRAFAC class TrmE-Era-EngA-EngB-Septin-like GTPase superfamily. EngA (Der) GTPase family. Associates with the 50S ribosomal subunit.

In terms of biological role, GTPase that plays an essential role in the late steps of ribosome biogenesis. The sequence is that of GTPase Der from Clostridium botulinum (strain Kyoto / Type A2).